A 326-amino-acid polypeptide reads, in one-letter code: Cell surface glycoprotein CD200 receptor 1 (326 aa).

An N-terminal signal peptide occupies residues 1-25 (MFCFWRTSALAVLLIWGVFVAGSSC). The Extracellular portion of the chain corresponds to 26 to 238 (TDKNQTTQNN…SRGGNQSLRP (213 aa)). N-linked (GlcNAc...) asparagine glycosylation is found at Asn29, Asn34, Asn35, Asn44, Asn93, Asn101, Asn159, Asn192, Asn207, Asn221, and Asn233. The Ig-like V-type domain maps to 51–136 (IGTKALLCCF…YTCETVTPEG (86 aa)). Cystine bridges form between Cys58-Cys129 and Cys82-Cys97. The 92-residue stretch at 138–229 (FEKNYDLQVL…GNQSLSIELS (92 aa)) folds into the Ig-like C2-type domain. Cystine bridges form between Cys164–Cys213 and Cys183–Cys201. The chain crosses the membrane as a helical span at residues 239 to 259 (YIPYIIPSIIILIIIGCICLL). The Cytoplasmic segment spans residues 260-326 (KISGFRKCKL…DCLTLSAIGI (67 aa)).

Belongs to the CD200R family. As to quaternary structure, CD200 and CD200R1 interact via their respective N-terminal Ig-like domains. Expressed in granulocytes, monocytes, most T-cells and a subset of NK, NKT and B-cells (at protein level). Expressed in the spleen, lung, liver, testis, bone marrow, lymph nodes, spinal cord, kidney, uterus and small intestine. Expressed in mast and dendritic cells. Expressed in the lung of N.brasiliensis-infected mice.

It localises to the cell membrane. Its function is as follows. Inhibitory receptor for the CD200/OX2 cell surface glycoprotein. Limits inflammation by inhibiting the expression of pro-inflammatory molecules including TNF-alpha, interferons, and inducible nitric oxide synthase (iNOS) in response to selected stimuli. This chain is Cell surface glycoprotein CD200 receptor 1 (Cd200r1), found in Mus musculus (Mouse).